The chain runs to 911 residues: Zinc finger protein 721 (911 aa).

A C2H2-type 1; degenerate zinc finger spans residues 69 to 91; that stretch reads FQCNARVKVFSKFANSNKDKTRH. A C2H2-type 2 zinc finger spans residues 97-119; sequence FKCNECGKSFQKFSDLTQHKGIH. The C2H2-type 3; degenerate zinc-finger motif lies at 125-147; that stretch reads YTCEERGKDFGWYTDLNQHKKIH. The C2H2-type 4 zinc finger occupies 153–175; the sequence is YKCEECGKAFNRSTNLTAHKRIH. Residues 181–203 form a C2H2-type 5; degenerate zinc finger; that stretch reads YTGEDRDRAFGWSTNLNEYKKIH. 7 consecutive C2H2-type zinc fingers follow at residues 209–231, 237–259, 265–287, 293–315, 321–343, 349–371, and 377–399; these read YKCK…EKIH, YKCK…KRIH, FKCL…RRIH, YTCE…RRIH, YTCG…RRIH, YKCE…KKIH, and YKCE…KRIH. A C2H2-type 13; degenerate zinc finger spans residues 405 to 427; sequence YTCEDRGRAFGLSTNLNEYKKIH. 6 consecutive C2H2-type zinc fingers follow at residues 433 to 455, 461 to 483, 489 to 511, 517 to 539, 545 to 567, and 573 to 595; these read YKCK…EKIH, YKCK…KRIH, FECL…RRIH, YTCE…RRIH, and YKCE…KKIH. Lys478 is covalently cross-linked (Glycyl lysine isopeptide (Lys-Gly) (interchain with G-Cter in SUMO2)). A C2H2-type 20; degenerate zinc finger spans residues 601-623; the sequence is YKCEECGKDFVWYTDLNQQKKIY. The segment at 629–651 adopts a C2H2-type 21; degenerate zinc-finger fold; it reads YKCEECGKAFAPSTDLNQHTKIL. A Glycyl lysine isopeptide (Lys-Gly) (interchain with G-Cter in SUMO2) cross-link involves residue Lys649. 2 C2H2-type zinc fingers span residues 657–679 and 685–707; these read YKCE…KKIH and YKCE…RRVH. A C2H2-type 24; degenerate zinc finger spans residues 713-735; that stretch reads YKCEDRGRSFGWSTNLNEYKKIH. C2H2-type zinc fingers lie at residues 741 to 763, 769 to 791, 797 to 819, 825 to 847, 853 to 875, and 881 to 903; these read YKCK…EKIH, YKCK…KRIH, FKCL…RRIH, YTCE…RRIH, and YTCG…KKIH. Lys786 participates in a covalent cross-link: Glycyl lysine isopeptide (Lys-Gly) (interchain with G-Cter in SUMO2).

This sequence belongs to the krueppel C2H2-type zinc-finger protein family.

The protein resides in the nucleus. May be involved in transcriptional regulation. This is Zinc finger protein 721 (ZNF721) from Homo sapiens (Human).